We begin with the raw amino-acid sequence, 239 residues long: UPF0126 membrane protein VC_2382 (239 aa).

6 helical membrane-spanning segments follow: residues 38–58 (LLYL…VLLA), 62–82 (KMDP…GGTI), 86–106 (ALGA…VIMI), 122–142 (AWWI…GIGV), 153–173 (LIAI…RDVL), and 185–205 (VYAT…AMGY).

It belongs to the UPF0126 family.

It localises to the cell membrane. This chain is UPF0126 membrane protein VC_2382, found in Vibrio cholerae serotype O1 (strain ATCC 39315 / El Tor Inaba N16961).